The following is a 237-amino-acid chain: MNRATPRRRRWRIGELAEATGVTVRTLHHYEHTGLLAATERTEGGHRMYDRESGQRVHQIRALRELGFSLVEIRKAMEGTTSLTDLLRKHLERIEVQVARTTLLRDRLRNMTIDSEAQVSVDELPATLNAMSRAETRSQTSRCTCNLAAEREDRWRRIRDDLRDCMDGGEHPCGERAKAVAVAARLLISEIAGDDSRVSMILKVLARLSAPRSLAGWDPCLMQYLDLALGGLEDQPY.

One can recognise an HTH merR-type domain in the interval 10-79; it reads RWRIGELAEA…LVEIRKAMEG (70 aa). A DNA-binding region (H-T-H motif) is located at residues 13–32; it reads IGELAEATGVTVRTLHHYEH.

In terms of biological role, involved in genotype-specific nodulation of soybeans. The sequence is that of Nodulation protein NolA (nolA) from Bradyrhizobium diazoefficiens (strain JCM 10833 / BCRC 13528 / IAM 13628 / NBRC 14792 / USDA 110).